The chain runs to 157 residues: UPF0225 protein Psyr_3863 (157 aa).

It belongs to the UPF0225 family.

The polypeptide is UPF0225 protein Psyr_3863 (Pseudomonas syringae pv. syringae (strain B728a)).